The following is a 732-amino-acid chain: Catalase-peroxidase (732 aa).

The tryptophyl-tyrosyl-methioninium (Trp-Tyr) (with M-246) cross-link spans 97–220 (WHSAGTYRTS…LAAVQMGLIY (124 aa)). His98 functions as the Proton acceptor in the catalytic mechanism. The tryptophyl-tyrosyl-methioninium (Tyr-Met) (with W-97) cross-link spans 220 to 246 (YVNPEGPDGNPDPVAAGRDIRETFARM). His261 serves as a coordination point for heme b.

This sequence belongs to the peroxidase family. Peroxidase/catalase subfamily. As to quaternary structure, homodimer or homotetramer. It depends on heme b as a cofactor. In terms of processing, formation of the three residue Trp-Tyr-Met cross-link is important for the catalase, but not the peroxidase activity of the enzyme.

It carries out the reaction H2O2 + AH2 = A + 2 H2O. The catalysed reaction is 2 H2O2 = O2 + 2 H2O. In terms of biological role, bifunctional enzyme with both catalase and broad-spectrum peroxidase activity. The polypeptide is Catalase-peroxidase (Pelodictyon phaeoclathratiforme (strain DSM 5477 / BU-1)).